The sequence spans 429 residues: Transcriptional coactivator AacuS (429 aa).

The HTH iclR-type domain occupies 80–144 (MASQTQLLAC…GFLQEPELGH (65 aa)). The H-T-H motif DNA-binding region spans 110–129 (IKDVAELIGVPENHICRIVR).

The protein localises to the nucleus. Functionally, transcriptional coactivator; part of the gene cluster that mediates the biosynthesis of the tetrahydroxanthone dimer secalonic acid D. The polypeptide is Transcriptional coactivator AacuS (Aspergillus aculeatus (strain ATCC 16872 / CBS 172.66 / WB 5094)).